A 305-amino-acid polypeptide reads, in one-letter code: NAD-dependent protein deacylase sirtuin-5, mitochondrial (305 aa).

A mitochondrion-targeting transit peptide spans 1–32 (MIVRQLWCSRGSTSHLCAAVRLNWRSPKMTRP). The 271-residue stretch at 33-303 (SSDLTAFREH…PPALERHESE (271 aa)) folds into the Deacetylase sirtuin-type domain. NAD(+) is bound at residue 54 to 73 (GAGVSAESGVPTFRGPGGFW). Positions 98 and 101 each coordinate substrate. 136–139 (QNID) lines the NAD(+) pocket. The Proton acceptor role is filled by H154. Positions 162, 165, 203, and 208 each coordinate Zn(2+). Residues 245–247 (GTS), 271–273 (NME), and C289 contribute to the NAD(+) site.

It belongs to the sirtuin family. Class III subfamily. It depends on Zn(2+) as a cofactor.

It is found in the mitochondrion. It localises to the cytoplasm. The protein resides in the cytosol. The protein localises to the nucleus. The catalysed reaction is N(6)-malonyl-L-lysyl-[protein] + NAD(+) + H2O = 2''-O-malonyl-ADP-D-ribose + nicotinamide + L-lysyl-[protein]. It carries out the reaction N(6)-succinyl-L-lysyl-[protein] + NAD(+) + H2O = 2''-O-succinyl-ADP-D-ribose + nicotinamide + L-lysyl-[protein]. The enzyme catalyses N(6)-glutaryl-L-lysyl-[protein] + NAD(+) + H2O = 2''-O-glutaryl-ADP-D-ribose + nicotinamide + L-lysyl-[protein]. Functionally, NAD-dependent lysine demalonylase, desuccinylase and deglutarylase that specifically removes malonyl, succinyl and glutaryl groups on target proteins. Has weak NAD-dependent protein deacetylase activity; however this activity may not be physiologically relevant in vivo. The protein is NAD-dependent protein deacylase sirtuin-5, mitochondrial (sirt5) of Danio rerio (Zebrafish).